We begin with the raw amino-acid sequence, 290 residues long: Agmatinase (290 aa).

6 residues coordinate Mn(2+): H112, D135, H137, D139, D216, and D218.

It belongs to the arginase family. Agmatinase subfamily. Mn(2+) serves as cofactor.

It carries out the reaction agmatine + H2O = urea + putrescine. Its pathway is amine and polyamine biosynthesis; putrescine biosynthesis via agmatine pathway; putrescine from agmatine: step 1/1. Its function is as follows. Catalyzes the formation of putrescine from agmatine. The protein is Agmatinase (speB) of Bacillus anthracis.